Here is a 247-residue protein sequence, read N- to C-terminus: 1-(5-phosphoribosyl)-5-[(5-phosphoribosylamino)methylideneamino] imidazole-4-carboxamide isomerase (247 aa).

Catalysis depends on Asp8, which acts as the Proton acceptor. Asp130 serves as the catalytic Proton donor.

The protein belongs to the HisA/HisF family.

It localises to the cytoplasm. It catalyses the reaction 1-(5-phospho-beta-D-ribosyl)-5-[(5-phospho-beta-D-ribosylamino)methylideneamino]imidazole-4-carboxamide = 5-[(5-phospho-1-deoxy-D-ribulos-1-ylimino)methylamino]-1-(5-phospho-beta-D-ribosyl)imidazole-4-carboxamide. It participates in amino-acid biosynthesis; L-histidine biosynthesis; L-histidine from 5-phospho-alpha-D-ribose 1-diphosphate: step 4/9. In Leptospira biflexa serovar Patoc (strain Patoc 1 / Ames), this protein is 1-(5-phosphoribosyl)-5-[(5-phosphoribosylamino)methylideneamino] imidazole-4-carboxamide isomerase.